The primary structure comprises 651 residues: Sodium/potassium/calcium exchanger 2 (651 aa).

Topologically, residues 1 to 38 (MALCKKTVGSVLEEWCLNEPLFGCKRHQNVRKKLRLIR) are cytoplasmic. Residues 39 to 59 (IIGLLVSVVAISTFSLSISAF) traverse the membrane as a helical segment. Over 60–134 (FKMETHSTVL…DLFSLEERRK (75 aa)) the chain is Extracellular. The segment at 92 to 123 (QNEGSTPDSPTSMKHEAEHDNATEEHSKGEYP) is disordered. Residues 93 to 103 (NEGSTPDSPTS) show a composition bias toward polar residues. Positions 104–122 (MKHEAEHDNATEEHSKGEY) are enriched in basic and acidic residues. The N-linked (GlcNAc...) asparagine glycan is linked to asparagine 112. The chain crosses the membrane as a helical span at residues 135–155 (GAVILHVIGMIYMFIALAIVC). Topologically, residues 156-179 (DEFFVPSLTVITEKLSISDDVAGA) are cytoplasmic. Residues 176–216 (VAGATFMAAGGSAPELFTSLIGVFISHSNVGIGTIVGSAVF) form an Alpha-1 repeat. The helical transmembrane segment at 180-200 (TFMAAGGSAPELFTSLIGVFI) threads the bilayer. The Extracellular segment spans residues 201-206 (SHSNVG). A helical transmembrane segment spans residues 207-227 (IGTIVGSAVFNILFVIGMCAL). Over 228-245 (FSREILNLTWWPLFRDVS) the chain is Cytoplasmic. The chain crosses the membrane as a helical span at residues 246-266 (FYIVDLILLIIFFLDNLIMWW). Over 267–459 (ESLTLLTAYF…SLAWPDTPRK (193 aa)) the chain is Extracellular. Residues 304–322 (ATTGDAEGKSPTAGDKDDQ) show a composition bias toward basic and acidic residues. The segment at 304–338 (ATTGDAEGKSPTAGDKDDQTLTTKPRLQRGGSSAS) is disordered. Over residues 323–338 (TLTTKPRLQRGGSSAS) the composition is skewed to polar residues. A helical transmembrane segment spans residues 460–480 (QLTYLLVLPIVFPLWVSLPDV). Over 481–487 (RNPRSRK) the chain is Cytoplasmic. The chain crosses the membrane as a helical span at residues 488–508 (FFPITFFGSISWIAFFSYLMV). At 509–523 (WWAHQVGETIGISEE) the chain is on the extracellular side. Residues 524 to 544 (IMGLTILAAGTSIPDLITSVI) traverse the membrane as a helical segment. Residues 531–562 (AAGTSIPDLITSVIVARKGLGDMAVSSSVGSN) form an Alpha-2 repeat. Residues 545–562 (VARKGLGDMAVSSSVGSN) lie on the Cytoplasmic side of the membrane. Residues 563–583 (IFDITVGLPLPWLLYAVINNF) traverse the membrane as a helical segment. Topologically, residues 584–592 (SPVTVSSNG) are extracellular. The chain crosses the membrane as a helical span at residues 593–613 (LFCAIVLLFIMLLFVILSIAF). Residues 614–620 (CKWRMNK) are Cytoplasmic-facing. The chain crosses the membrane as a helical span at residues 621–641 (FLGFLMFGLYFVFLIVSVLLE). The Extracellular portion of the chain corresponds to 642-651 (DKVIQCPVSI).

Belongs to the Ca(2+):cation antiporter (CaCA) (TC 2.A.19) family. SLC24A subfamily. Retinal cones. Found in the cone inner segment layer and in a subpopulation of ganglion cells.

It localises to the cell membrane. The enzyme catalyses Ca(2+)(out) + K(+)(out) + 4 Na(+)(in) = Ca(2+)(in) + K(+)(in) + 4 Na(+)(out). Calcium, potassium:sodium antiporter that transports 1 Ca(2+) and 1 K(+) in exchange for 4 Na(+). Required for learming and memory by regulating neuronal Ca(2+), which is essential for the development of synaptic plasticity. The chain is Sodium/potassium/calcium exchanger 2 (SLC24A2) from Gallus gallus (Chicken).